The chain runs to 221 residues: Probable septum site-determining protein MinC (221 aa).

The protein belongs to the MinC family. In terms of assembly, interacts with MinD and FtsZ.

In terms of biological role, cell division inhibitor that blocks the formation of polar Z ring septums. Rapidly oscillates between the poles of the cell to destabilize FtsZ filaments that have formed before they mature into polar Z rings. Prevents FtsZ polymerization. The chain is Probable septum site-determining protein MinC from Aliivibrio salmonicida (strain LFI1238) (Vibrio salmonicida (strain LFI1238)).